The following is a 265-amino-acid chain: C-type lectin domain family 12 member A (265 aa).

The Cytoplasmic segment spans residues 1–43; the sequence is MSEEVTYADLQFQNSSEMEKIPEIGKFGEKAPPAPSHVWRPAA. Residues 5 to 10 carry the ITIM motif motif; it reads VTYADL. Phosphotyrosine is present on Tyr-7. Residues 44-64 form a helical; Signal-anchor for type II membrane protein membrane-spanning segment; that stretch reads LFLTLLCLLLLIGLGVLASMF. Topologically, residues 65–265 are extracellular; the sequence is HVTLKIEMKK…QLGSTYFREA (201 aa). N-linked (GlcNAc...) asparagine glycans are attached at residues Asn-88 and Asn-98. Intrachain disulfides connect Cys-118–Cys-130, Cys-133–Cys-144, Cys-161–Cys-248, and Cys-227–Cys-240. The C-type lectin domain occupies 140–249; it reads HKDSCYFLSD…CTYKKRMICE (110 aa). N-linked (GlcNAc...) asparagine glycosylation occurs at Asn-165.

In terms of assembly, homodimer; disulfide-linked. Interacts (when the ITIM motif is phosphorylated) with PTPN6 and PTPN11. Phosphorylated at Tyr-7 by SRC in the ITIM motif following ligand-binding, promoting recruitment of tyrosine-protein phosphatases PTPN6 and PTPN11. Post-translationally, highly N-glycosylated; glycosylation varies between cell types. Preferentially expressed in lymphoid tissues and immune cells, including natural killer (NK) cells, T-cells, dendritic cells and monocytes or macrophages. Detected in spleen macrophage-rich red pulp and in lymph node (at protein level). Detected in peripheral blood leukocytes, dendritic cells, bone marrow, monocytes, mononuclear leukocytes and macrophages.

The protein resides in the cell membrane. Functionally, myeloid inhibitory C-type lectin receptor that acts as a negative regulator of myeloid cell activation. Myeloid cell inhibition is required to limit proinflammatory pathways and protect against excessive inflammation. Specifically recognizes and binds various structures, such as neutrophil extracellular traps (NETs) or monosodium urate crystals. Also acts as a pattern-recognition receptor for pathogen-associated molecules, such as plasmodium hemozoin or mycobacterial micolic acid. Ligand-binding induces phosphorylation of its ITIM motif, followed by recruitment of tyrosine-protein phosphatases PTPN6 and PTPN11, which counteract tyrosine-protein kinase SYK, thereby preventing myeloid cell activation. Acts as a pattern-recognition receptor for NETs in neutrophils: specifically recognizes DNA in NETs, leading to inhibit neutrophil activation and limit further NET formation. This regulation is essential for controlling key neutrophil responses and limit NET-mediated inflammatory conditions. Also recognizes dead cells by acting as a receptor for monosodium urate crystals, leading to down-regulate neutrophil activation. Binding to monosodium urate crystals also promotes the type I interferon response. Acts as an inhibitor of natural killer (NK) cell cytotoxicity. Also acts as an ihibitor of dendritic cell maturation in an IL10-dependent manner. This Homo sapiens (Human) protein is C-type lectin domain family 12 member A.